A 362-amino-acid polypeptide reads, in one-letter code: 3-dehydroquinate synthase (362 aa).

Residues 71–76 (DGEQYK), 105–109 (GVVGD), 129–130 (TT), Lys-142, Lys-151, and 169–172 (CLKT) each bind NAD(+). Residues Glu-184, His-247, and His-264 each coordinate Zn(2+).

This sequence belongs to the sugar phosphate cyclases superfamily. Dehydroquinate synthase family. It depends on Co(2+) as a cofactor. Requires Zn(2+) as cofactor. The cofactor is NAD(+).

It localises to the cytoplasm. The catalysed reaction is 7-phospho-2-dehydro-3-deoxy-D-arabino-heptonate = 3-dehydroquinate + phosphate. It participates in metabolic intermediate biosynthesis; chorismate biosynthesis; chorismate from D-erythrose 4-phosphate and phosphoenolpyruvate: step 2/7. In terms of biological role, catalyzes the conversion of 3-deoxy-D-arabino-heptulosonate 7-phosphate (DAHP) to dehydroquinate (DHQ). The polypeptide is 3-dehydroquinate synthase (Shigella flexneri serotype 5b (strain 8401)).